The following is a 119-amino-acid chain: NAD(P)H-quinone oxidoreductase subunit M (119 aa).

Belongs to the complex I NdhM subunit family. In terms of assembly, NDH-1 can be composed of about 15 different subunits; different subcomplexes with different compositions have been identified which probably have different functions.

It localises to the cellular thylakoid membrane. The enzyme catalyses a plastoquinone + NADH + (n+1) H(+)(in) = a plastoquinol + NAD(+) + n H(+)(out). It carries out the reaction a plastoquinone + NADPH + (n+1) H(+)(in) = a plastoquinol + NADP(+) + n H(+)(out). Its function is as follows. NDH-1 shuttles electrons from an unknown electron donor, via FMN and iron-sulfur (Fe-S) centers, to quinones in the respiratory and/or the photosynthetic chain. The immediate electron acceptor for the enzyme in this species is believed to be plastoquinone. Couples the redox reaction to proton translocation, and thus conserves the redox energy in a proton gradient. Cyanobacterial NDH-1 also plays a role in inorganic carbon-concentration. The chain is NAD(P)H-quinone oxidoreductase subunit M from Picosynechococcus sp. (strain ATCC 27264 / PCC 7002 / PR-6) (Agmenellum quadruplicatum).